A 586-amino-acid chain; its full sequence is Aspartate--tRNA(Asp/Asn) ligase (586 aa).

Glu-175 is an L-aspartate binding site. The interval 199–202 (QIFK) is aspartate. Arg-221 is an L-aspartate binding site. ATP is bound by residues 221 to 223 (RDE) and Gln-230. His-448 provides a ligand contact to L-aspartate. Glu-482 is a binding site for ATP. Arg-489 serves as a coordination point for L-aspartate. Residue 534 to 537 (GVDR) coordinates ATP.

It belongs to the class-II aminoacyl-tRNA synthetase family. Type 1 subfamily. In terms of assembly, homodimer.

The protein localises to the cytoplasm. It carries out the reaction tRNA(Asx) + L-aspartate + ATP = L-aspartyl-tRNA(Asx) + AMP + diphosphate. Its function is as follows. Aspartyl-tRNA synthetase with relaxed tRNA specificity since it is able to aspartylate not only its cognate tRNA(Asp) but also tRNA(Asn). Reaction proceeds in two steps: L-aspartate is first activated by ATP to form Asp-AMP and then transferred to the acceptor end of tRNA(Asp/Asn). This chain is Aspartate--tRNA(Asp/Asn) ligase, found in Syntrophomonas wolfei subsp. wolfei (strain DSM 2245B / Goettingen).